A 241-amino-acid polypeptide reads, in one-letter code: Small ribosomal subunit protein uS2 (241 aa).

The protein belongs to the universal ribosomal protein uS2 family.

The sequence is that of Small ribosomal subunit protein uS2 from Salmonella choleraesuis (strain SC-B67).